The following is a 90-amino-acid chain: Progonadoliberin-3 (90 aa).

The signal sequence occupies residues 1 to 23 (MEANSRVMVRVLLLALVVQVTLS). Gln-24 is subject to Pyrrolidone carboxylic acid. The residue at position 33 (Gly-33) is a Glycine amide. The segment at 56-90 (LPEEASAQTQERLRPYNVINDDSSHFDRKKRSPNK) is disordered.

This sequence belongs to the GnRH family.

The protein resides in the secreted. In terms of biological role, stimulates the secretion of gonadotropins. The sequence is that of Progonadoliberin-3 (gnrh3) from Dicentrarchus labrax (European seabass).